A 312-amino-acid chain; its full sequence is Glyoxylate/hydroxypyruvate reductase A (312 aa).

Arg227 is a catalytic residue. His275 functions as the Proton donor in the catalytic mechanism.

This sequence belongs to the D-isomer specific 2-hydroxyacid dehydrogenase family. GhrA subfamily.

It localises to the cytoplasm. The enzyme catalyses glycolate + NADP(+) = glyoxylate + NADPH + H(+). It catalyses the reaction (R)-glycerate + NAD(+) = 3-hydroxypyruvate + NADH + H(+). The catalysed reaction is (R)-glycerate + NADP(+) = 3-hydroxypyruvate + NADPH + H(+). Its function is as follows. Catalyzes the NADPH-dependent reduction of glyoxylate and hydroxypyruvate into glycolate and glycerate, respectively. The protein is Glyoxylate/hydroxypyruvate reductase A of Escherichia fergusonii (strain ATCC 35469 / DSM 13698 / CCUG 18766 / IAM 14443 / JCM 21226 / LMG 7866 / NBRC 102419 / NCTC 12128 / CDC 0568-73).